A 114-amino-acid polypeptide reads, in one-letter code: Probable acid stress chaperone HdeA (114 aa).

The first 26 residues, 1–26, serve as a signal peptide directing secretion; the sequence is MIKALFNKNTALAAVAILALSGGAMA. Residues cysteine 46 and cysteine 94 are joined by a disulfide bond.

This sequence belongs to the HdeA family.

The protein resides in the periplasm. Required for optimal acid stress protection. Exhibits a chaperone-like activity only at low pH by suppressing non-specifically the aggregation of denaturated periplasmic proteins. Contributes to acid resistance. Not required for wild-type virulence in the BALB/c mouse model. The polypeptide is Probable acid stress chaperone HdeA (Brucella abortus (strain 2308)).